Here is a 273-residue protein sequence, read N- to C-terminus: Putative methyltransferase Cher3 (273 aa).

The 273-residue stretch at 1–273 (MTSERNTDIE…VKPQRIFRKS (273 aa)) folds into the CheR-type methyltransferase domain. Residues serine 76, arginine 80, glutamate 114, aspartate 137, 199–200 (SL), and 215–216 (RN) each bind S-adenosyl-L-methionine.

In Pseudomonas putida (strain ATCC 47054 / DSM 6125 / CFBP 8728 / NCIMB 11950 / KT2440), this protein is Putative methyltransferase Cher3 (cheR3).